The chain runs to 259 residues: 5'-nucleotidase SurE (259 aa).

A divalent metal cation contacts are provided by D8, D9, S41, and N93.

This sequence belongs to the SurE nucleotidase family. A divalent metal cation serves as cofactor.

The protein localises to the cytoplasm. It carries out the reaction a ribonucleoside 5'-phosphate + H2O = a ribonucleoside + phosphate. Nucleotidase that shows phosphatase activity on nucleoside 5'-monophosphates. The protein is 5'-nucleotidase SurE of Verminephrobacter eiseniae (strain EF01-2).